The following is a 31-amino-acid chain: MWRDSLCAAAGYALGAGTRLRSVLSSRKLQP.

As to quaternary structure, interacts with lactate dehydrogenases LDHA and LDHB; interaction with mitochondrial LDH leads to inhibition of lactate dehydrogenase activity, preventing conversion of lactate to pyruvate. Expressed in brain (at protein level). Expressed at lower levels in glioblastomas than in normal brain tissue (at protein level).

The protein resides in the mitochondrion. Inhibits lactate dehydrogenase (LDH)-mediated conversion of lactate to pyruvate in mitochondria by competing with mitochondrial LDH for binding to NAD(+). Also inhibits cellular lactate utilization. This chain is PTEN upstream open reading frame MP31, found in Homo sapiens (Human).